The primary structure comprises 451 residues: CBL-interacting protein kinase 22 (451 aa).

A Protein kinase domain is found at 26–301 (YELGRVLGQG…IGEIFDHPWL (276 aa)). ATP is bound by residues 32–40 (LGQGASSKV) and lysine 55. Aspartate 165 acts as the Proton acceptor in catalysis. Residues 183 to 216 (DFGLSAFADADQHLGATDGLAATHCGSPAYVAPE) are activation loop. The region spanning 330–356 (ELEQAMELNAFDIIGFASGCDLSGLIG) is the NAF domain. Residues 361–389 (RVRFVLPGGDSKSVLDKVEKLGREEGLVV) are PPI.

It belongs to the protein kinase superfamily. CAMK Ser/Thr protein kinase family. SNF1 subfamily. Mn(2+) serves as cofactor.

The enzyme catalyses L-seryl-[protein] + ATP = O-phospho-L-seryl-[protein] + ADP + H(+). It carries out the reaction L-threonyl-[protein] + ATP = O-phospho-L-threonyl-[protein] + ADP + H(+). CIPK serine-threonine protein kinases interact with CBL proteins. Binding of a CBL protein to the regulatory NAF domain of CIPK protein lead to the activation of the kinase in a calcium-dependent manner. The protein is CBL-interacting protein kinase 22 (CIPK22) of Oryza sativa subsp. japonica (Rice).